Consider the following 399-residue polypeptide: Phosphoglycerate kinase (399 aa).

Substrate contacts are provided by residues 21–23 (DFN), R36, 59–62 (HLGR), R120, and R158. ATP-binding positions include K209, G297, E328, and 355–358 (GGDS).

This sequence belongs to the phosphoglycerate kinase family. In terms of assembly, monomer.

The protein localises to the cytoplasm. The catalysed reaction is (2R)-3-phosphoglycerate + ATP = (2R)-3-phospho-glyceroyl phosphate + ADP. It participates in carbohydrate degradation; glycolysis; pyruvate from D-glyceraldehyde 3-phosphate: step 2/5. The sequence is that of Phosphoglycerate kinase from Streptococcus thermophilus (strain ATCC BAA-250 / LMG 18311).